Reading from the N-terminus, the 250-residue chain is 6-phosphogluconate dehydrogenase, decarboxylating (250 aa).

Lysine 29 and arginine 56 together coordinate substrate. Lysine 77 is modified (N6-acetyllysine). Positions 214 and 220 each coordinate substrate. Position 245–248 (245–248 (SSSY)) interacts with NADP(+).

This sequence belongs to the 6-phosphogluconate dehydrogenase family. In terms of assembly, homodimer.

It is found in the cytoplasm. The catalysed reaction is 6-phospho-D-gluconate + NADP(+) = D-ribulose 5-phosphate + CO2 + NADPH. It functions in the pathway carbohydrate degradation; pentose phosphate pathway; D-ribulose 5-phosphate from D-glucose 6-phosphate (oxidative stage): step 3/3. Catalyzes the oxidative decarboxylation of 6-phosphogluconate to ribulose 5-phosphate and CO(2), with concomitant reduction of NADP to NADPH. The sequence is that of 6-phosphogluconate dehydrogenase, decarboxylating (PGD) from Sus scrofa (Pig).